The sequence spans 265 residues: ETS-related transcription factor Elf-5 (265 aa).

The PNT domain occupies 43 to 129 (YPAFEHQTAC…FILQNIRTQG (87 aa)). Positions 173–254 (SHLWEFVRDL…VDRRLVYKFG (82 aa)) form a DNA-binding region, ETS.

This sequence belongs to the ETS family. Expressed exclusively in tissues with a high content of epithelial cells. Highly expressed in salivary gland, mammary gland, kidney and prostate. Weakly expressed in placenta and lung. Isoform 1 and isoform 2 are differentially expressed in different tissues. In the kidney, only isoform 1 was expressed, while prostate expressed both isoforms, with levels of isoform 2 being higher. Expression is up-regulated during keratinocyte differentiation. Several epithelial carcinoma cell lines showed lack of expression.

It is found in the nucleus. Transcriptionally activator that may play a role in regulating the later stages of keratinocytes terminal differentiation. In terms of biological role, isoform 2 binds to DNA sequences containing the consensus nucleotide core sequence GGA[AT]. Transcriptionally activates SPRR2A and the parotid gland-specific PSP promoters. The chain is ETS-related transcription factor Elf-5 (ELF5) from Homo sapiens (Human).